The following is a 248-amino-acid chain: UPF0736 protein BCG9842_B4111 (248 aa).

The protein belongs to the UPF0736 family.

This Bacillus cereus (strain G9842) protein is UPF0736 protein BCG9842_B4111.